The sequence spans 341 residues: Spindolin (341 aa).

The N-terminal stretch at 1–20 is a signal peptide; sequence MNKLILISLIASLYQVEVDA.

Homodimer; disulfide-linked.

This protein is a spindle body protein. This is Spindolin (SPH) from Choristoneura biennis entomopoxvirus (CbEPV).